The sequence spans 289 residues: tRNA (adenine(58)-N(1))-methyltransferase catalytic subunit TRMT61A (289 aa).

Residue Ser2 is modified to N-acetylserine. Residues 20–22 (LGH), 35–42 (QTQTRHGV), 64–65 (GW), 85–89 (QILYS), and 110–117 (SGTGSGSV) each bind substrate. Residues Leu87, 114 to 116 (SGS), Glu135, Arg140, 163 to 164 (DV), and Asp181 each bind S-adenosyl-L-methionine. Substrate is bound by residues 180-183 (LDIP) and 205-212 (SFSPCIEQ). Residues 245–272 (LPPPDLGTGTDGPAGSDTSPFRSGTPMK) form a disordered region. Positions 250-259 (LGTGTDGPAG) are enriched in low complexity. At Ser263 the chain carries Phosphoserine. Thr278 is a binding site for substrate.

The protein belongs to the class I-like SAM-binding methyltransferase superfamily. TRM61 family. As to quaternary structure, heterotetramer; composed of two copies of TRMT6 and two copies of TRMT61A.

It localises to the nucleus. The enzyme catalyses adenosine(58) in tRNA + S-adenosyl-L-methionine = N(1)-methyladenosine(58) in tRNA + S-adenosyl-L-homocysteine + H(+). The catalysed reaction is an adenosine in mRNA + S-adenosyl-L-methionine = an N(1)-methyladenosine in mRNA + S-adenosyl-L-homocysteine + H(+). In terms of biological role, catalytic subunit of tRNA (adenine-N(1)-)-methyltransferase, which catalyzes the formation of N(1)-methyladenine at position 58 (m1A58) in initiator methionyl-tRNA. Catalytic subunit of mRNA N(1)-methyltransferase complex, which mediates methylation of adenosine residues at the N(1) position of a small subset of mRNAs: N(1) methylation takes place in tRNA T-loop-like structures of mRNAs and is only present at low stoichiometries. This chain is tRNA (adenine(58)-N(1))-methyltransferase catalytic subunit TRMT61A (TRMT61A), found in Homo sapiens (Human).